Here is a 316-residue protein sequence, read N- to C-terminus: Transaldolase (316 aa).

Lys125 serves as the catalytic Schiff-base intermediate with substrate.

This sequence belongs to the transaldolase family. Type 1 subfamily. Homodimer.

Its subcellular location is the cytoplasm. The catalysed reaction is D-sedoheptulose 7-phosphate + D-glyceraldehyde 3-phosphate = D-erythrose 4-phosphate + beta-D-fructose 6-phosphate. The protein operates within carbohydrate degradation; pentose phosphate pathway; D-glyceraldehyde 3-phosphate and beta-D-fructose 6-phosphate from D-ribose 5-phosphate and D-xylulose 5-phosphate (non-oxidative stage): step 2/3. Functionally, transaldolase is important for the balance of metabolites in the pentose-phosphate pathway. The polypeptide is Transaldolase (Verminephrobacter eiseniae (strain EF01-2)).